A 547-amino-acid chain; its full sequence is TBCC domain-containing protein 1 (547 aa).

A C-CAP/cofactor C-like domain is found at 304 to 435 (PHTHRMVVMS…LEDHMAHTGL (132 aa)).

This sequence belongs to the TBCC family.

Its subcellular location is the cytoplasm. It localises to the cytoskeleton. The protein localises to the microtubule organizing center. The protein resides in the centrosome. It is found in the spindle pole. In terms of biological role, may play a role in the regulation of centrosome and Golgi apparatus positioning. The polypeptide is TBCC domain-containing protein 1 (tbccd1) (Xenopus tropicalis (Western clawed frog)).